Reading from the N-terminus, the 62-residue chain is Protein DsrB (62 aa).

Belongs to the DsrB family.

The polypeptide is Protein DsrB (Shigella flexneri serotype 5b (strain 8401)).